Here is a 594-residue protein sequence, read N- to C-terminus: Developmental and secondary metabolism regulator veA (594 aa).

Residues 24–220 (GRRLFYRIDV…AEQGTRVRIR (197 aa)) enclose the Velvet domain. The Nuclear localization signal motif lies at 38–43 (EKCRAC). 2 disordered regions span residues 40–59 (CRAC…VDPP) and 210–558 (MAEQ…DVEE). Residues 217–229 (VRIRRDVRMRRRD) show a composition bias toward basic residues. Residues 296 to 307 (APPPPNPPPPGF) are compositionally biased toward pro residues. The segment covering 327 to 351 (SHSQYQQPTSSSSSSEQVSSVPQSP) has biased composition (low complexity). A compositionally biased stretch (polar residues) spans 352–362 (AYSSHAAQQHY). The span at 374 to 383 (PERRLSDHRS) shows a compositional bias: basic and acidic residues. Low complexity predominate over residues 384–403 (SQPNNHPQQSPHQHSYSHRS). The segment covering 405-416 (PQRERFMPDSRR) has biased composition (basic and acidic residues). Positions 457-506 (VADTQATPHLPPIRWPRPNMNLPSPPSEHQEALQPLQPAPLHYESQTHQQ) are PEST. Residues 523 to 538 (YSYGYSYSHNHSHGYG) are compositionally biased toward low complexity.

The protein belongs to the velvet family. VeA subfamily. In terms of assembly, component of the heterotrimeric velvet complex composed of LAEA, VEA and VELB; VEA acting as a bridging protein between LAEA and VELB.

It localises to the nucleus. Its subcellular location is the cytoplasm. Its function is as follows. Component of the velvet transcription factor complex that controls sexual/asexual developmental ratio in response to light, promoting sexual development in the darkness while stimulating asexual sporulation under illumination. The velvet complex acts as a global regulator for secondary metabolite gene expression. Regulates of the response to reactive oxygen species (ROS) stress. The sequence is that of Developmental and secondary metabolism regulator veA from Pyricularia oryzae (strain 70-15 / ATCC MYA-4617 / FGSC 8958) (Rice blast fungus).